The chain runs to 674 residues: DNA ligase (674 aa).

NAD(+) contacts are provided by residues 34–38 (DFEFD), 83–84 (SL), and Glu-117. The active-site N6-AMP-lysine intermediate is Lys-119. Residues Arg-140, Glu-184, Lys-297, and Lys-321 each coordinate NAD(+). Residues Cys-415, Cys-418, Cys-433, and Cys-439 each contribute to the Zn(2+) site. Positions 598 to 674 (LVNTNFEGQS…IDEDEFERML (77 aa)) constitute a BRCT domain.

This sequence belongs to the NAD-dependent DNA ligase family. LigA subfamily. It depends on Mg(2+) as a cofactor. The cofactor is Mn(2+).

The catalysed reaction is NAD(+) + (deoxyribonucleotide)n-3'-hydroxyl + 5'-phospho-(deoxyribonucleotide)m = (deoxyribonucleotide)n+m + AMP + beta-nicotinamide D-nucleotide.. Functionally, DNA ligase that catalyzes the formation of phosphodiester linkages between 5'-phosphoryl and 3'-hydroxyl groups in double-stranded DNA using NAD as a coenzyme and as the energy source for the reaction. It is essential for DNA replication and repair of damaged DNA. This chain is DNA ligase, found in Chlorobaculum parvum (strain DSM 263 / NCIMB 8327) (Chlorobium vibrioforme subsp. thiosulfatophilum).